We begin with the raw amino-acid sequence, 466 residues long: Ribulose bisphosphate carboxylase large chain (466 aa).

The residue at position 5 (lysine 5) is an N6,N6,N6-trimethyllysine. Residues asparagine 114 and threonine 164 each contribute to the substrate site. Catalysis depends on lysine 166, which acts as the Proton acceptor. Lysine 168 is a substrate binding site. Residues lysine 192, aspartate 194, and glutamate 195 each contribute to the Mg(2+) site. Lysine 192 carries the post-translational modification N6-carboxylysine. Residue histidine 285 is the Proton acceptor of the active site. Residues arginine 286, histidine 318, and serine 370 each coordinate substrate.

It belongs to the RuBisCO large chain family. Type I subfamily. As to quaternary structure, heterohexadecamer of 8 large chains and 8 small chains. The cofactor is Mg(2+).

It is found in the plastid. Its subcellular location is the chloroplast. It catalyses the reaction 2 (2R)-3-phosphoglycerate + 2 H(+) = D-ribulose 1,5-bisphosphate + CO2 + H2O. The catalysed reaction is D-ribulose 1,5-bisphosphate + O2 = 2-phosphoglycolate + (2R)-3-phosphoglycerate + 2 H(+). Functionally, ruBisCO catalyzes two reactions: the carboxylation of D-ribulose 1,5-bisphosphate, the primary event in carbon dioxide fixation, as well as the oxidative fragmentation of the pentose substrate in the photorespiration process. Both reactions occur simultaneously and in competition at the same active site. The polypeptide is Ribulose bisphosphate carboxylase large chain (Lobelia sp).